Reading from the N-terminus, the 1173-residue chain is Ubiquitin conjugation factor E4 B (1173 aa).

Met-1 carries the N-acetylmethionine modification. Positions 1-155 (MEELSADEIR…EPSSGPEVSE (155 aa)) are disordered. The span at 16 to 33 (RLAGGQTSQPTTPLTSPQ) shows a compositional bias: low complexity. Phosphoserine is present on residues Ser-23 and Ser-31. Positions 51-64 (QSLGLNVHNMTPAT) are enriched in polar residues. Residues 76 to 99 (SQSSEGVSSLSSSPSNSLETQSQS) are compositionally biased toward low complexity. Residues Ser-84, Ser-88, Ser-90, Ser-101, Ser-103, Ser-105, and Ser-124 each carry the phosphoserine modification. A compositionally biased stretch (basic and acidic residues) spans 134 to 147 (NDRREKRSLSDKEP). Phosphoserine is present on residues Ser-238, Ser-674, and Ser-840. Residues 928-948 (NKEQWDQLPRDQQQARQSQLA) form a disordered region. Residues 937 to 948 (RDQQQARQSQLA) are compositionally biased toward low complexity. Residues 1098-1171 (DAPDEFRDPL…QAWMREKQSS (74 aa)) form the U-box domain. The residue at position 1136 (Ser-1136) is a Phosphoserine.

The protein belongs to the ubiquitin conjugation factor E4 family. In terms of assembly, interacts with VCP. Interacts with STUB1/CHIP and UNC45B. Proteolytically cleaved by caspases during apoptosis. Cleaved efficiently at Asp-123 by caspase-6 and granzyme B. Cleaved with approximately 10-fold less efficiency at Asp-109 by caspase-3 and caspase-7. Expressed predominantly in neuronal tissues. Also detected in liver, heart, brain, kidney and testis.

The protein localises to the cytoplasm. The protein resides in the nucleus. It carries out the reaction S-ubiquitinyl-[E2 ubiquitin-conjugating enzyme]-L-cysteine + [acceptor protein]-L-lysine = [E2 ubiquitin-conjugating enzyme]-L-cysteine + N(6)-ubiquitinyl-[acceptor protein]-L-lysine.. It functions in the pathway protein modification; protein ubiquitination. Its function is as follows. Ubiquitin-protein ligase that probably functions as an E3 ligase in conjunction with specific E1 and E2 ligases. May also function as an E4 ligase mediating the assembly of polyubiquitin chains on substrates ubiquitinated by another E3 ubiquitin ligase. May regulate myosin assembly in striated muscles together with STUB1 and VCP/p97 by targeting myosin chaperone UNC45B for proteasomal degradation. In Mus musculus (Mouse), this protein is Ubiquitin conjugation factor E4 B.